We begin with the raw amino-acid sequence, 576 residues long: 5'-nucleotidase (576 aa).

The first 28 residues, 1-28 (MRPAAAKVPKWLLLALSALLPQWPAASA), serve as a signal peptide directing secretion. D38 and H40 together coordinate Zn(2+). C53 and C59 are oxidised to a cystine. The N-linked (GlcNAc...) asparagine glycan is linked to N55. Zn(2+) contacts are provided by D87, N119, H222, and H245. Residues N313 and N335 are each glycosylated (N-linked (GlcNAc...) asparagine). 2 cysteine pairs are disulfide-bonded: C355/C360 and C367/C389. R356 lines the AMP pocket. R356 is an IMP binding site. AMP is bound by residues N392 and R397. IMP is bound by residues N392 and R397. N405 is a glycosylation site (N-linked (GlcNAc...) asparagine). AMP is bound at residue F419. Residue F419 participates in IMP binding. C478 and C481 form a disulfide bridge. AMP contacts are provided by Y502 and D508. The IMP site is built by Y502 and D508. S551 carries GPI-anchor amidated serine lipidation. Residues 552–576 (AASHYQGSFPLVILSFWAMILILYQ) constitute a propeptide, removed in mature form.

This sequence belongs to the 5'-nucleotidase family. As to quaternary structure, homodimer. Requires Zn(2+) as cofactor. Expressed at high levels in the placenta, kidney, lung and stomach and at lower levels in the thymus, spleen, skeletal muscle and esophagus.

The protein localises to the cell membrane. The enzyme catalyses a ribonucleoside 5'-phosphate + H2O = a ribonucleoside + phosphate. It carries out the reaction a 2'-deoxyribonucleoside 5'-phosphate + H2O = a 2'-deoxyribonucleoside + phosphate. The catalysed reaction is dTMP + H2O = thymidine + phosphate. It catalyses the reaction CMP + H2O = cytidine + phosphate. The enzyme catalyses IMP + H2O = inosine + phosphate. It carries out the reaction AMP + H2O = adenosine + phosphate. The catalysed reaction is GMP + H2O = guanosine + phosphate. It catalyses the reaction UMP + H2O = uridine + phosphate. The enzyme catalyses dAMP + H2O = 2'-deoxyadenosine + phosphate. It carries out the reaction dCMP + H2O = 2'-deoxycytidine + phosphate. Its function is as follows. Catalyzes the hydrolysis of nucleotide monophosphates, releasing inorganic phosphate and the corresponding nucleoside. Hydrolyzes IMP. Shows a preference for ribonucleotide monophosphates over their equivalent deoxyribose forms. Although AMP is the preferred substrate can also hydrolyze UMP, GMP, CMP, dAMP, dCMP, dTMP, NAD and NMN. This chain is 5'-nucleotidase (Nt5e), found in Mus musculus (Mouse).